Reading from the N-terminus, the 433-residue chain is Glutamate-1-semialdehyde 2,1-aminomutase (433 aa).

Lysine 273 carries the N6-(pyridoxal phosphate)lysine modification.

It belongs to the class-III pyridoxal-phosphate-dependent aminotransferase family. HemL subfamily. As to quaternary structure, homodimer. The cofactor is pyridoxal 5'-phosphate.

It is found in the cytoplasm. The enzyme catalyses (S)-4-amino-5-oxopentanoate = 5-aminolevulinate. It functions in the pathway porphyrin-containing compound metabolism; protoporphyrin-IX biosynthesis; 5-aminolevulinate from L-glutamyl-tRNA(Glu): step 2/2. It participates in porphyrin-containing compound metabolism; chlorophyll biosynthesis. This chain is Glutamate-1-semialdehyde 2,1-aminomutase, found in Microcystis aeruginosa (strain NIES-843 / IAM M-2473).